A 217-amino-acid chain; its full sequence is Large ribosomal subunit protein bL25 (217 aa).

A disordered region spans residues 187–217; that stretch reads STPSGLEVEEETGEEESAEPEVIEKGKKEEE. Acidic residues predominate over residues 193–207; that stretch reads EVEEETGEEESAEPE. Residues 208-217 are compositionally biased toward basic and acidic residues; the sequence is VIEKGKKEEE.

This sequence belongs to the bacterial ribosomal protein bL25 family. CTC subfamily. In terms of assembly, part of the 50S ribosomal subunit; part of the 5S rRNA/L5/L18/L25 subcomplex. Contacts the 5S rRNA. Binds to the 5S rRNA independently of L5 and L18.

Functionally, this is one of the proteins that binds to the 5S RNA in the ribosome where it forms part of the central protuberance. The polypeptide is Large ribosomal subunit protein bL25 (Thermosipho africanus (strain TCF52B)).